The chain runs to 111 residues: Phosphoribosyl-ATP pyrophosphatase (111 aa).

This sequence belongs to the PRA-PH family.

Its subcellular location is the cytoplasm. The catalysed reaction is 1-(5-phospho-beta-D-ribosyl)-ATP + H2O = 1-(5-phospho-beta-D-ribosyl)-5'-AMP + diphosphate + H(+). It participates in amino-acid biosynthesis; L-histidine biosynthesis; L-histidine from 5-phospho-alpha-D-ribose 1-diphosphate: step 2/9. This is Phosphoribosyl-ATP pyrophosphatase from Azotobacter vinelandii (strain DJ / ATCC BAA-1303).